The sequence spans 166 residues: Transcriptional repressor NrdR (166 aa).

The segment at 3–34 is a zinc-finger region; that stretch reads CPFCGFSDSRVLDSRPTVEGNSIRRRRECCGC. The ATP-cone domain occupies 49-139; it reads LIVVKKDGRR…VYREFRDAES (91 aa).

It belongs to the NrdR family. Requires Zn(2+) as cofactor.

Negatively regulates transcription of bacterial ribonucleotide reductase nrd genes and operons by binding to NrdR-boxes. The protein is Transcriptional repressor NrdR of Pelotomaculum thermopropionicum (strain DSM 13744 / JCM 10971 / SI).